A 310-amino-acid polypeptide reads, in one-letter code: Protoheme IX farnesyltransferase (310 aa).

Helical transmembrane passes span 31–51, 53–73, 102–122, 124–144, 149–169, 170–190, 242–262, and 289–309; these read VIEL…RGSV, PLLI…ANTL, NALI…WGTS, LLSG…YTLL, TSQN…IGWS, AVTG…FFWT, LATG…FLVM, and LAVV…TLLG.

Belongs to the UbiA prenyltransferase family. Protoheme IX farnesyltransferase subfamily.

It is found in the cell membrane. It catalyses the reaction heme b + (2E,6E)-farnesyl diphosphate + H2O = Fe(II)-heme o + diphosphate. It functions in the pathway porphyrin-containing compound metabolism; heme O biosynthesis; heme O from protoheme: step 1/1. Converts heme B (protoheme IX) to heme O by substitution of the vinyl group on carbon 2 of heme B porphyrin ring with a hydroxyethyl farnesyl side group. The protein is Protoheme IX farnesyltransferase of Mycobacterium sp. (strain JLS).